Consider the following 152-residue polypeptide: Ribosome maturation factor RimP (152 aa).

This sequence belongs to the RimP family.

Its subcellular location is the cytoplasm. Required for maturation of 30S ribosomal subunits. The protein is Ribosome maturation factor RimP of Ruminiclostridium cellulolyticum (strain ATCC 35319 / DSM 5812 / JCM 6584 / H10) (Clostridium cellulolyticum).